The chain runs to 684 residues: Protein LDB19 (684 aa).

Disordered stretches follow at residues 462 to 483, 510 to 531, and 593 to 632; these read GEAQ…PAGL, SAEE…DKRI, and SSRV…TSGS. Over residues 593 to 602 the composition is skewed to low complexity; the sequence is SSRVVSGPES.

Belongs to the LDB19 family.

It localises to the cytoplasm. The protein resides in the golgi apparatus. Functionally, may be involved in protein-linked oligosaccharide phosphorylation. The protein is Protein LDB19 (LDB19) of Eremothecium gossypii (strain ATCC 10895 / CBS 109.51 / FGSC 9923 / NRRL Y-1056) (Yeast).